Here is a 512-residue protein sequence, read N- to C-terminus: Cytochrome P450 monooxygenase pbrB (512 aa).

Residues L6–Y29 traverse the membrane as a helical segment. Position 452 (C452) interacts with heme.

The protein belongs to the cytochrome P450 family. Requires heme as cofactor.

The protein resides in the membrane. It participates in secondary metabolite biosynthesis; terpenoid biosynthesis. In terms of biological role, cytochrome P450 monooxygenase; part of the gene cluster that mediates the biosynthesis of the sesquiterpenoid aspterric acid (AA), an inhibitor of dihydroxy-acid dehydratase (DHAD) effective as an herbicide. PbrB catalyzes the second step within the pathway and converts (-)-daucane produced by the terpene cyclase pbrA into an alpha-epoxy carboxylate intermediate which is further converted into the tricyclic aspterric acid by the cytochrome P450 monooxygenase pbrC. The protein is Cytochrome P450 monooxygenase pbrB of Penicillium brasilianum.